The chain runs to 40 residues: U12-ctenitoxin-Co1a (40 aa).

Cystine bridges form between cysteine 2–cysteine 16, cysteine 9–cysteine 22, cysteine 15–cysteine 31, and cysteine 24–cysteine 29.

As to expression, expressed by the venom gland.

It localises to the secreted. Functionally, insecticidal neurotoxin that reversibly inhibits the N-methyl-D-aspartate (NMDA)-subtype of ionotropic glutamate receptor (GRIN) and inhibits inactivation of insect sodium channels (Nav). In vivo, is highly toxic to insects. The protein is U12-ctenitoxin-Co1a of Ctenus ornatus (Brazilian spider).